The sequence spans 481 residues: UDP-N-acetylmuramoyl-L-alanyl-D-glutamate--L-lysine ligase (481 aa).

UDP-N-acetyl-alpha-D-muramoyl-L-alanyl-D-glutamate is bound at residue Ser-42. 118–124 (GTKGKTT) is an ATP binding site. UDP-N-acetyl-alpha-D-muramoyl-L-alanyl-D-glutamate contacts are provided by residues Gln-158, 160-161 (TT), Ser-187, and Arg-195. Lys-229 carries the post-translational modification N6-carboxylysine. Residues 404-407 (DDPN) carry the L-lysine recognition motif motif.

This sequence belongs to the MurCDEF family. MurE subfamily. In terms of processing, carboxylation is probably crucial for Mg(2+) binding and, consequently, for the gamma-phosphate positioning of ATP.

The protein resides in the cytoplasm. It carries out the reaction UDP-N-acetyl-alpha-D-muramoyl-L-alanyl-D-glutamate + L-lysine + ATP = UDP-N-acetyl-alpha-D-muramoyl-L-alanyl-gamma-D-glutamyl-L-lysine + ADP + phosphate + H(+). The protein operates within cell wall biogenesis; peptidoglycan biosynthesis. In terms of biological role, catalyzes the addition of L-lysine to the nucleotide precursor UDP-N-acetylmuramoyl-L-alanyl-D-glutamate (UMAG) in the biosynthesis of bacterial cell-wall peptidoglycan. The chain is UDP-N-acetylmuramoyl-L-alanyl-D-glutamate--L-lysine ligase from Streptococcus pyogenes serotype M3 (strain SSI-1).